A 120-amino-acid chain; its full sequence is Large ribosomal subunit protein uL18 (120 aa).

Belongs to the universal ribosomal protein uL18 family. As to quaternary structure, part of the 50S ribosomal subunit; part of the 5S rRNA/L5/L18/L25 subcomplex. Contacts the 5S and 23S rRNAs.

Functionally, this is one of the proteins that bind and probably mediate the attachment of the 5S RNA into the large ribosomal subunit, where it forms part of the central protuberance. The protein is Large ribosomal subunit protein uL18 of Gluconobacter oxydans (strain 621H) (Gluconobacter suboxydans).